The chain runs to 1006 residues: Unconventional myosin-Id (1006 aa).

The residue at position 2 (Ala2) is an N-acetylalanine. In terms of domain architecture, Myosin motor spans 9-695 (FGKADFVLMD…TLFTLEELRA (687 aa)). Position 102-109 (102-109 (GESGAGKT)) interacts with ATP. Residue Ser200 is modified to Phosphoserine. Tyr536 carries the phosphotyrosine modification. Residues 572–594 (MIALVDNLASKEPYYVRCIKPND) form an actin-binding region. IQ domains lie at 699 to 719 (IRIVLFLQKVWRGTLARMRYK) and 721 to 741 (TKAALTIIRYYRRYKVKSYIH). Residues 812-1005 (GQRADLGLQR…RSGFILSVPG (194 aa)) enclose the TH1 domain.

It belongs to the TRAFAC class myosin-kinesin ATPase superfamily. Myosin family. Interacts (via the two IQ motifs) with calmodulin. Binds an additional calmodulin chain via a third, C-terminal region. Interacts with F-actin. As to expression, expressed in many tissues. Highest levels in brain, followed by lung and ovary; expression is lowest in spleen.

It localises to the cytoplasm. Its subcellular location is the perikaryon. The protein resides in the cell projection. The protein localises to the dendrite. It is found in the early endosome. It localises to the cell cortex. In terms of biological role, unconventional myosin that functions as actin-based motor protein with ATPase activity. Plays a role in endosomal protein trafficking, and especially in the transfer of cargo proteins from early to recycling endosomes. Required for normal planar cell polarity in ciliated tracheal cells, for normal rotational polarity of cilia, and for coordinated, unidirectional ciliary movement in the trachea. Required for normal, polarized cilia organization in brain ependymal epithelial cells. This Homo sapiens (Human) protein is Unconventional myosin-Id (MYO1D).